Reading from the N-terminus, the 310-residue chain is Probable mitochondrial import receptor subunit TOM40-2 (310 aa).

Position 1 is an N-acetylmethionine (M1).

It belongs to the Tom40 family. As to quaternary structure, forms part of the preprotein translocase complex of the outer mitochondrial membrane (TOM complex) which consists of at least 6 different proteins (TOM5, TOM6, TOM7, TOM20, TOM22/TOM9 and TOM40). Present in a large lipid-enriched complex called mitochondrial transmembrane lipoprotein (MTL) complex made of proteins located in the two mitochondrial membranes, including the TOM complex and the core components of the MICOS complex and containing at least digalactosyldiacylglycerol (DGDG). Binds to MIC60. Component of a mitochondrial large protein complex that contains, at least, MIC60, DGS1, TOM40, TOM20 proteins, and petC/RISP. As to expression, expressed in roots, flowers, young cotyledons and leaves.

The protein localises to the mitochondrion outer membrane. In terms of biological role, central component of the receptor complex responsible for the recognition and translocation of cytosolically synthesized mitochondrial preproteins. Together with TOM22 functions as the transit peptide receptor at the surface of the mitochondrion outer membrane and facilitates the movement of preproteins into the translocation pore. Directly involved in the pore formation. In Arabidopsis thaliana (Mouse-ear cress), this protein is Probable mitochondrial import receptor subunit TOM40-2.